The primary structure comprises 72 residues: MLVITRKKGESFLIGDDIEITVVKLDDGSVKLAIDAPKKLTILRKELYNEVQEENKKATNFNPSILKNIKSK.

It belongs to the CsrA/RsmA family. In terms of assembly, homodimer; the beta-strands of each monomer intercalate to form a hydrophobic core, while the alpha-helices form wings that extend away from the core.

It localises to the cytoplasm. Its function is as follows. A translational regulator that binds mRNA to regulate translation initiation and/or mRNA stability. Usually binds in the 5'-UTR at or near the Shine-Dalgarno sequence preventing ribosome-binding, thus repressing translation. Its main target seems to be the major flagellin gene, while its function is anatagonized by FliW. The polypeptide is Translational regulator CsrA (Clostridium botulinum (strain Loch Maree / Type A3)).